A 290-amino-acid polypeptide reads, in one-letter code: MLRRETKPESDRPRKVRFRIASSHSGRVLKEVYEDGQAPGSLDSECASICAIDGLSDSEGQQNGHIGSEDNEQEKDQDNLLVLARTASEKAFGTRRVNILSKNGTVRGVKYKVSAGQALFNNLTKVLQQPSADLEFDRVVIYTTCLRVVRTTFERCELVRKIFQNHRVKFEEKNIALNGDYGKELDERCRRVSEAPSLPVVFIDGHYLGGAEKILSMNESGELQDLLTKIERVQHPHECPSCGGFGFLPCSVCHGSKMSVFRNCFTDAFKALKCTACNENGLQRCKNCTC.

The 108-residue stretch at 127–234 (LQQPSADLEF…DLLTKIERVQ (108 aa)) folds into the Glutaredoxin domain.

It belongs to the GRXCR1 family. In the inner ear, expressed predominantly in sensory hair cells and their stereocilia bundles with higher levels in outer hair cells (OHC) at P1 and in inner hair cells (IHC) at P5. At P1, expression is prominent in each row of stereocilia within bundles including immature shorter stereocilia. Expression is also observed in apical microvilli of sensory cells at P1 and in kinocilia at P1 and P5. In the adult, expression is localized throughout the length of the stereocilia of both OHC and IHC (at protein level).

The protein localises to the cell projection. Its subcellular location is the stereocilium. It is found in the microvillus. The protein resides in the kinocilium. May play a role in actin filament architecture in developing stereocilia of sensory cells. The chain is Glutaredoxin domain-containing cysteine-rich protein 1 (Grxcr1) from Mus musculus (Mouse).